A 368-amino-acid chain; its full sequence is 3-dehydroquinate synthase (368 aa).

NAD(+)-binding positions include 71–76 (DGEAFK), 105–109 (GVVGD), 129–130 (TT), Lys142, Lys151, and 169–172 (TLRT). Residues Glu184, His247, and His264 each coordinate Zn(2+).

It belongs to the sugar phosphate cyclases superfamily. Dehydroquinate synthase family. Co(2+) is required as a cofactor. It depends on Zn(2+) as a cofactor. The cofactor is NAD(+).

Its subcellular location is the cytoplasm. The enzyme catalyses 7-phospho-2-dehydro-3-deoxy-D-arabino-heptonate = 3-dehydroquinate + phosphate. The protein operates within metabolic intermediate biosynthesis; chorismate biosynthesis; chorismate from D-erythrose 4-phosphate and phosphoenolpyruvate: step 2/7. Functionally, catalyzes the conversion of 3-deoxy-D-arabino-heptulosonate 7-phosphate (DAHP) to dehydroquinate (DHQ). The sequence is that of 3-dehydroquinate synthase from Cupriavidus pinatubonensis (strain JMP 134 / LMG 1197) (Cupriavidus necator (strain JMP 134)).